The primary structure comprises 579 residues: SHC-transforming protein 1 (579 aa).

An N-acetylmethionine modification is found at M1. The segment at 1–137 (MDLLPPKPKY…QLGGEEWTRH (137 aa)) is disordered. Residues 16-44 (ESLSSLEEGASGSTPPEELPSPSASSLGP) show a composition bias toward low complexity. Phosphoserine occurs at positions 36 and 139. K154 bears the N6-acetyllysine mark. One can recognise a PID domain in the interval 156 to 339 (MGPGVSYLVR…AGFDGSAWDE (184 aa)). The interval 337–357 (WDEEEEEPPDHQYYNDFPGKE) is disordered. The interval 340 to 483 (EEEEPPDHQY…SMAEQLQGEP (144 aa)) is CH1. A phosphotyrosine mark is found at Y349, Y350, and Y423. The tract at residues 432–451 (ARQAGGGAGPPNPSLNGSAP) is disordered. A Phosphoserine modification is found at S449. The 92-residue stretch at 484–575 (WFHGKLSRRE…GSELCLQQPV (92 aa)) folds into the SH2 domain.

Interacts with CPNE3; this interaction may mediate the binding of CPNE3 with ERBB2. Interacts with the NPXY motif of tyrosine-phosphorylated IGF1R and INSR in vitro via the PID domain. Once activated, binds to GRB2. Interacts with tyrosine-phosphorylated DDR2 and CD3T. Interacts with the N-terminal region of APS. Interacts with GRB7 and KIT. Interacts with PTK2/FAK1. Interacts with phosphorylated LRP1 and IRS4. Interacts with FLT4 (tyrosine-phosphorylated). Interacts with PDGFRB (tyrosine-phosphorylated). Interacts with ERBB4. Interacts with TEK/TIE2 (tyrosine-phosphorylated). Interacts with ALK, GAB2, TRIM31, INPP5D/SHIP1 and INPPL1/SHIP2. Interacts with PTPN6/SHP (tyrosine phosphorylated). Identified in a complex containing FGFR4, NCAM1, CDH2, PLCG1, FRS2, SRC, SHC1, GAP43 and CTTN. Interacts with EPHB1 and GRB2; activates the MAPK/ERK cascade to regulate cell migration. Interacts with the Trk receptors NTRK1, NTRK2 and NTRK3; in a phosphotyrosine-dependent manner. Interacts with CEACAM1; this interaction is CEACAM1-phosphorylation-dependent and mediates interaction with EGFR or INSR resulting in decrease coupling of SHC1 to the MAPK3/ERK1-MAPK1/ERK2 pathway. Interacts (via PID domain) with PEAK1 (when phosphorylated at 'Tyr-1177'). Found in a complex with PPP1CA, PPP1CC, SHC1 and PEAK1. In terms of processing, phosphorylated in response to FLT4 signaling. Tyrosine phosphorylated by ligand-activated PDGFRB. May be tyrosine phosphorylated by activated PTK2/FAK1. Tyrosine phosphorylated by TEK/TIE2. Tyrosine phosphorylated by activated PTK2B/PYK2. Dephosphorylation by PTPN2 may regulate interaction with GRB2. Phosphorylated by activated epidermal growth factor receptor. Phosphorylated in response to KIT signaling. Isoform p47Shc and isoform p52Shc are phosphorylated on tyrosine residues of the Pro-rich domain. Isoform p66Shc is phosphorylated on Ser-36 by PRKCB upon treatment with insulin, hydrogen peroxide or irradiation with ultraviolet light. FLT3 signaling promotes tyrosine phosphorylation of isoform p47Shc and isoform p52Shc. Also tyrosine phosphorylated by ligand-activated ALK. Widely expressed. Expressed in neural stem cells but absent in mature neurons.

Its subcellular location is the cytoplasm. The protein localises to the cell junction. It localises to the focal adhesion. The protein resides in the mitochondrion matrix. It is found in the mitochondrion. Functionally, signaling adapter that couples activated growth factor receptors to signaling pathways. Participates in signaling downstream of the angiopoietin receptor TEK/TIE2, and plays a role in the regulation of endothelial cell migration and sprouting angiogenesis. Participates in a signaling cascade initiated by activated KIT and KITLG/SCF. Isoform p47Shc and isoform p52Shc, once phosphorylated, couple activated receptor kinases to Ras via the recruitment of the GRB2/SOS complex and are implicated in the cytoplasmic propagation of mitogenic signals. Isoform p47Shc and isoform p52 may thus function as initiators of the Ras signaling cascade in various non-neuronal systems. Isoform p66Shc does not mediate Ras activation, but is involved in signal transduction pathways that regulate the cellular response to oxidative stress and life span. Isoform p66Shc acts as a downstream target of the tumor suppressor p53 and is indispensable for the ability of stress-activated p53 to induce elevation of intracellular oxidants, cytochrome c release and apoptosis. The expression of isoform p66Shc has been correlated with life span. In Mus musculus (Mouse), this protein is SHC-transforming protein 1 (Shc1).